Here is a 354-residue protein sequence, read N- to C-terminus: UPF0283 membrane protein CGSHiGG_02710 (354 aa).

The next 3 membrane-spanning stretches (helical) occupy residues 57–77 (LLKF…VQWI), 87–107 (IYLA…KEII), and 211–231 (ESAV…FIAW).

The protein belongs to the UPF0283 family.

It is found in the cell inner membrane. This Haemophilus influenzae (strain PittGG) protein is UPF0283 membrane protein CGSHiGG_02710.